A 363-amino-acid polypeptide reads, in one-letter code: Protein-arginine kinase (363 aa).

In terms of domain architecture, Phosphagen kinase C-terminal spans 24 to 254; the sequence is IVLSSRIRLA…AQLIEQERSA (231 aa). Residues 27–31, His-92, Arg-125, 176–180, and 207–212 each bind ATP; these read SSRIR, RASVM, and RGIYGE. The RDXXRA motif of the pArg binding pocket involved in allosteric regulation motif lies at 337-342; the sequence is RDIKRA.

The protein belongs to the ATP:guanido phosphotransferase family.

It catalyses the reaction L-arginyl-[protein] + ATP = N(omega)-phospho-L-arginyl-[protein] + ADP + H(+). Its activity is regulated as follows. Appears to be allosterically activated by the binding of pArg-containing polypeptides to the pArg-binding pocket localized in the C-terminal domain of McsB. Functionally, catalyzes the specific phosphorylation of arginine residues in a large number of proteins. Is part of the bacterial stress response system. Protein arginine phosphorylation has a physiologically important role and is involved in the regulation of many critical cellular processes, such as protein homeostasis, motility, competence, and stringent and stress responses, by regulating gene expression and protein activity. In Bacillus pumilus (strain SAFR-032), this protein is Protein-arginine kinase.